A 201-amino-acid polypeptide reads, in one-letter code: Probable DNA replication complex GINS protein PSF1 (201 aa).

The protein belongs to the GINS1/PSF1 family. As to quaternary structure, component of the GINS complex which is a heterotetramer of gins1, gins2, gins3 and gins4.

It localises to the nucleus. Functionally, the GINS complex plays an essential role in the initiation of DNA replication. The polypeptide is Probable DNA replication complex GINS protein PSF1 (Caenorhabditis briggsae).